The following is a 326-amino-acid chain: AA10 family lytic polysaccharide monooxygenase C (326 aa).

The signal sequence occupies residues 1–32 (MVFSNSNASVSLFRLVALVATLSHLVFTFVDA). Cu(2+)-binding residues include H33 and H118. Residues 33–200 (HGYVTFPASR…ANAFYQCLDL (168 aa)) form the Chitin-binding type-4 domain. C81 and C197 are joined by a disulfide. N206, N215, N266, and N303 each carry an N-linked (GlcNAc...) asparagine glycan. Positions 206–326 (NSSSSSSSSN…KSQMRRDRQG (121 aa)) are disordered. The span at 207 to 281 (SSSSSSSSNS…NNGGSSGSTT (75 aa)) shows a compositional bias: low complexity.

It belongs to the polysaccharide monooxygenase AA10 family. Cu(2+) serves as cofactor.

It localises to the secreted. Lytic polysaccharide monooxygenase (LPMO) that oxidatively cleaves alpha- and beta-chitin with C1 regioselectivity. Catalysis by LPMOs requires the reduction of the active-site copper from Cu(II) to Cu(I) by a reducing agent and H(2)O(2) or O(2) as a cosubstrate. Exhibits enzymatic activity on U.maydis fungal cell wall chitin and Boosts chitin hydrolysis by chitinase GH18A. This is AA10 family lytic polysaccharide monooxygenase C from Mycosarcoma maydis (Corn smut fungus).